Reading from the N-terminus, the 314-residue chain is Methionyl-tRNA formyltransferase (314 aa).

112–115 (SLLP) contributes to the (6S)-5,6,7,8-tetrahydrofolate binding site.

It belongs to the Fmt family.

It carries out the reaction L-methionyl-tRNA(fMet) + (6R)-10-formyltetrahydrofolate = N-formyl-L-methionyl-tRNA(fMet) + (6S)-5,6,7,8-tetrahydrofolate + H(+). In terms of biological role, attaches a formyl group to the free amino group of methionyl-tRNA(fMet). The formyl group appears to play a dual role in the initiator identity of N-formylmethionyl-tRNA by promoting its recognition by IF2 and preventing the misappropriation of this tRNA by the elongation apparatus. In Legionella pneumophila (strain Paris), this protein is Methionyl-tRNA formyltransferase.